Here is a 366-residue protein sequence, read N- to C-terminus: MAAARHSTLDFMLGAKADGETILKGLQSIFQEQGMAESVHTWQDHGYLATYTNKNGSFANLRIYPHGLVLLDLQSYDGDAQGKEEIDSILNKVEERMKELSQDSTGRVKRLPPIVRGGAIDRYWPTADGRLVEYDIDEVVYDEDSPYQNIKILHSKQFGNILILSGDVNLAESDLAYTRAIMGSGKEDYTGKDVLILGGGDGGILCEIVKLKPKMVTMVEIDQMVIDGCKKYMRKTCGDVLDNLKGDCYQVLIEDCIPVLKRYAKEGREFDYVINDLTAVPISTSPEEDSTWEFLRLILDLSMKVLKQDGKYFTQGNCVNLTEALSLYEEQLGRLYCPVEFSKEIVCVPSYLELWVFYTVWKKAKP.

Ala2 carries the N-acetylalanine modification. The residue at position 57 (Ser57) is a Phosphoserine. One can recognise a PABS domain in the interval 122-362; the sequence is RYWPTADGRL…ELWVFYTVWK (241 aa). Gln148 is an S-adenosyl 3-(methylsulfanyl)propylamine binding site. The spermidine site is built by Tyr177 and Asp201. S-adenosyl 3-(methylsulfanyl)propylamine-binding positions include Glu220 and 255–256; that span reads DC. Asp276 (proton acceptor) is an active-site residue. Spermidine contacts are provided by Tyr351 and Glu353.

This sequence belongs to the spermidine/spermine synthase family. Homodimer. Dimerization is mediated through the N-terminal domain and seems to be required for activity as deletion of the N-terminal domain causes complete loss of activity.

The catalysed reaction is S-adenosyl 3-(methylsulfanyl)propylamine + spermidine = spermine + S-methyl-5'-thioadenosine + H(+). It functions in the pathway amine and polyamine biosynthesis; spermine biosynthesis; spermine from spermidine: step 1/1. In terms of biological role, catalyzes the production of spermine from spermidine and decarboxylated S-adenosylmethionine (dcSAM). This chain is Spermine synthase, found in Homo sapiens (Human).